The chain runs to 759 residues: Phosphoribosylformylglycinamidine synthase subunit PurL (759 aa).

The active site involves His48. Positions 51 and 91 each coordinate ATP. Glu93 serves as a coordination point for Mg(2+). Residues 94 to 97 (SHNH) and Arg116 each bind substrate. The active-site Proton acceptor is the His95. Asp117 lines the Mg(2+) pocket. Gln240 serves as a coordination point for substrate. Asp268 is a Mg(2+) binding site. 317–319 (ESQ) serves as a coordination point for substrate. The ATP site is built by Asn501 and Gly538. Position 539 (Asn539) interacts with Mg(2+). Ser541 contributes to the substrate binding site.

This sequence belongs to the FGAMS family. In terms of assembly, monomer. Part of the FGAM synthase complex composed of 1 PurL, 1 PurQ and 2 PurS subunits.

It is found in the cytoplasm. The catalysed reaction is N(2)-formyl-N(1)-(5-phospho-beta-D-ribosyl)glycinamide + L-glutamine + ATP + H2O = 2-formamido-N(1)-(5-O-phospho-beta-D-ribosyl)acetamidine + L-glutamate + ADP + phosphate + H(+). It participates in purine metabolism; IMP biosynthesis via de novo pathway; 5-amino-1-(5-phospho-D-ribosyl)imidazole from N(2)-formyl-N(1)-(5-phospho-D-ribosyl)glycinamide: step 1/2. Part of the phosphoribosylformylglycinamidine synthase complex involved in the purines biosynthetic pathway. Catalyzes the ATP-dependent conversion of formylglycinamide ribonucleotide (FGAR) and glutamine to yield formylglycinamidine ribonucleotide (FGAM) and glutamate. The FGAM synthase complex is composed of three subunits. PurQ produces an ammonia molecule by converting glutamine to glutamate. PurL transfers the ammonia molecule to FGAR to form FGAM in an ATP-dependent manner. PurS interacts with PurQ and PurL and is thought to assist in the transfer of the ammonia molecule from PurQ to PurL. This Chlorobaculum tepidum (strain ATCC 49652 / DSM 12025 / NBRC 103806 / TLS) (Chlorobium tepidum) protein is Phosphoribosylformylglycinamidine synthase subunit PurL.